We begin with the raw amino-acid sequence, 435 residues long: ATP-dependent protease ATPase subunit HslU (435 aa).

Residues Ile-18, 60-65 (GVGKTE), Asp-248, Glu-313, and Arg-385 contribute to the ATP site.

This sequence belongs to the ClpX chaperone family. HslU subfamily. A double ring-shaped homohexamer of HslV is capped on each side by a ring-shaped HslU homohexamer. The assembly of the HslU/HslV complex is dependent on binding of ATP.

The protein localises to the cytoplasm. ATPase subunit of a proteasome-like degradation complex; this subunit has chaperone activity. The binding of ATP and its subsequent hydrolysis by HslU are essential for unfolding of protein substrates subsequently hydrolyzed by HslV. HslU recognizes the N-terminal part of its protein substrates and unfolds these before they are guided to HslV for hydrolysis. The polypeptide is ATP-dependent protease ATPase subunit HslU (Agrobacterium fabrum (strain C58 / ATCC 33970) (Agrobacterium tumefaciens (strain C58))).